A 436-amino-acid polypeptide reads, in one-letter code: MSTGFFGDIAKIKYEGPDSTNPLAFRHYNPDEIVGGKRMEDHLRFAVAYWHTFTWPGGDPFGGQTFQRPWFEDTMQAAKLKADVAFEFFSLLGSPFYCFHDADVRPEGKNFAENTKNLNEIVDYFAQKQADTGVKLLWGTANLFSNRRFMSGAATNPDPDVFAFSAATVKTCMDATKTLGGANYVLWGGREGYETLLNTDLSRELDQLGRFLNLVVEYKYKIGFEGTILIEPKPQEPTKHQYDYDVATVYAFLQKNGLEKEVKVNIEQGHAILAGHSFEHELAMANAFGIFGSIDMNRNDYQSGWDTDQFPNNVPEMALAYYHVLAGGGFKNGGTNFDSKLRRQSLDPQDLLIGHIGGMDCCARGLKAAAKMIEDGALSKPLSERYAKWDSPEAQKMLRGELKLEEIAALVERDDINPEPKPGRQEYLENVVNRYV.

Residues His100 and Asp103 contribute to the active site. Mg(2+)-binding residues include Glu231, Glu267, His270, Asp295, Asp306, Asp308, and Asp338.

The protein belongs to the xylose isomerase family. As to quaternary structure, homotetramer. The cofactor is Mg(2+).

It localises to the cytoplasm. The catalysed reaction is alpha-D-xylose = alpha-D-xylulofuranose. This is Xylose isomerase from Agrobacterium fabrum (strain C58 / ATCC 33970) (Agrobacterium tumefaciens (strain C58)).